The primary structure comprises 1351 residues: D-lysergyl-peptide-synthetase subunit 2 (1351 aa).

Positions 285–684 are adenylation (A) domain; sequence RCLSQPTASA…GRKDTQVKLR (400 aa). Residues 828 to 904 enclose the Carrier domain; the sequence is APQTTTEKLL…ALACVVRSGK (77 aa). Serine 865 bears the O-(pantetheine 4'-phosphoryl)serine mark. Positions 941–1340 are condensation (C) domain; it reads EDVYPCTPLQ…LIRDILAVPQ (400 aa).

Belongs to the NRP synthetase family.

It participates in alkaloid biosynthesis; ergot alkaloid biosynthesis. D-lysergyl-peptide-synthetase subunit 2; part of the gene cluster that mediates the biosynthesis of fungal ergot alkaloid ergovaline, the predominant ergopeptine product in E.festucae var. lolii. DmaW catalyzes the first step of ergot alkaloid biosynthesis by condensing dimethylallyl diphosphate (DMAP) and tryptophan to form 4-dimethylallyl-L-tryptophan. The second step is catalyzed by the methyltransferase easF that methylates 4-dimethylallyl-L-tryptophan in the presence of S-adenosyl-L-methionine, resulting in the formation of 4-dimethylallyl-L-abrine. The catalase easC and the FAD-dependent oxidoreductase easE then transform 4-dimethylallyl-L-abrine to chanoclavine-I which is further oxidized by easD in the presence of NAD(+), resulting in the formation of chanoclavine-I aldehyde. Agroclavine dehydrogenase easG then mediates the conversion of chanoclavine-I aldehyde to agroclavine via a non-enzymatic adduct reaction: the substrate is an iminium intermediate that is formed spontaneously from chanoclavine-I aldehyde in the presence of glutathione. The presence of easA is not required to complete this reaction. Further conversion of agroclavine to paspalic acid is a two-step process involving oxidation of agroclavine to elymoclavine and of elymoclavine to paspalic acid, the second step being performed by the elymoclavine oxidase cloA. Paspalic acid is then further converted to D-lysergic acid. Ergovaline is assembled from D-lysergic acid and three different amino acids by the D-lysergyl-peptide-synthetase composed of a monomudular (lpsB) and a trimodular (lpsA) nonribosomal peptide synthetase subunit. This is D-lysergyl-peptide-synthetase subunit 2 from Epichloe festucae var. lolii (Neotyphodium lolii).